Here is a 320-residue protein sequence, read N- to C-terminus: Polyisoprenyl-teichoic acid--peptidoglycan teichoic acid transferase TagU (320 aa).

Residues 1-15 are Cytoplasmic-facing; sequence MVSRTERKQHKKRRK. Residues 16–36 traverse the membrane as a helical; Signal-anchor for type II membrane protein segment; that stretch reads WPFWLGGILLVLLLLISGGIF. Over 37–320 the chain is Extracellular; the sequence is LIYNQVGAVV…SEITGHMQEQ (284 aa).

Belongs to the LytR/CpsA/Psr (LCP) family.

It localises to the cell membrane. It functions in the pathway cell wall biogenesis. Functionally, may catalyze the final step in cell wall teichoic acid biosynthesis, the transfer of the anionic cell wall polymers (APs) from their lipid-linked precursor to the cell wall peptidoglycan (PG). This is Polyisoprenyl-teichoic acid--peptidoglycan teichoic acid transferase TagU from Oceanobacillus iheyensis (strain DSM 14371 / CIP 107618 / JCM 11309 / KCTC 3954 / HTE831).